The primary structure comprises 137 residues: Large ribosomal subunit protein uL16 (137 aa).

The protein belongs to the universal ribosomal protein uL16 family. As to quaternary structure, part of the 50S ribosomal subunit.

Functionally, binds 23S rRNA and is also seen to make contacts with the A and possibly P site tRNAs. The chain is Large ribosomal subunit protein uL16 from Bradyrhizobium sp. (strain BTAi1 / ATCC BAA-1182).